Reading from the N-terminus, the 204-residue chain is HTH-type transcriptional repressor KstR (204 aa).

An HTH tetR-type domain is found at 18-78 (RERRKRILDA…SALGREFERI (61 aa)). The segment at residues 41–60 (QMRAVAERADVAVGTLYRYF) is a DNA-binding region (H-T-H motif).

As to quaternary structure, homodimer.

In terms of biological role, controls the expression of genes used for utilizing diverse lipids as energy sources. This is HTH-type transcriptional repressor KstR (kstR) from Mycolicibacterium smegmatis (strain ATCC 700084 / mc(2)155) (Mycobacterium smegmatis).